The chain runs to 453 residues: uncharacterized protein (453 aa).

[4Fe-4S] cluster-binding residues include C74, C80, C83, and C162. Residues Q286, Y315, E336, and D384 each contribute to the S-adenosyl-L-methionine site. C411 functions as the Nucleophile in the catalytic mechanism.

It belongs to the class I-like SAM-binding methyltransferase superfamily. RNA M5U methyltransferase family.

This is an uncharacterized protein from Staphylococcus aureus (strain Mu50 / ATCC 700699).